The following is a 144-amino-acid chain: 6-pyruvoyl tetrahydrobiopterin synthase (144 aa).

A Phosphoserine modification is found at Ser-18. His-23 is a Zn(2+) binding site. A Phosphoserine modification is found at Ser-27. Cys-42 serves as the catalytic Proton acceptor. His-48 and His-50 together coordinate Zn(2+). Catalysis depends on His-89, which acts as the Charge relay system. Position 127 is a phosphotyrosine (Tyr-127). Catalysis depends on Glu-133, which acts as the Charge relay system.

Belongs to the PTPS family. As to quaternary structure, homodimer. Homohexamer formed of two homotrimers in a head to head fashion. The cofactor is Zn(2+). Post-translationally, phosphorylation of Ser-18 is required for maximal enzyme activity.

The enzyme catalyses 7,8-dihydroneopterin 3'-triphosphate = 6-pyruvoyl-5,6,7,8-tetrahydropterin + triphosphate + H(+). It participates in cofactor biosynthesis; tetrahydrobiopterin biosynthesis; tetrahydrobiopterin from 7,8-dihydroneopterin triphosphate: step 1/3. Involved in the biosynthesis of tetrahydrobiopterin, an essential cofactor of aromatic amino acid hydroxylases. Catalyzes the transformation of 7,8-dihydroneopterin triphosphate into 6-pyruvoyl tetrahydropterin. The polypeptide is 6-pyruvoyl tetrahydrobiopterin synthase (Mus musculus (Mouse)).